Here is a 275-residue protein sequence, read N- to C-terminus: NH(3)-dependent NAD(+) synthetase (275 aa).

50–57 contacts ATP; that stretch reads GISGGVDS. Asp56 provides a ligand contact to Mg(2+). Arg147 serves as a coordination point for deamido-NAD(+). Thr167 lines the ATP pocket. A Mg(2+)-binding site is contributed by Glu172. Deamido-NAD(+) contacts are provided by Lys180 and Asp187. ATP is bound by residues Lys196 and Thr218. 267-268 contacts deamido-NAD(+); sequence HK.

This sequence belongs to the NAD synthetase family. Homodimer.

The enzyme catalyses deamido-NAD(+) + NH4(+) + ATP = AMP + diphosphate + NAD(+) + H(+). It functions in the pathway cofactor biosynthesis; NAD(+) biosynthesis; NAD(+) from deamido-NAD(+) (ammonia route): step 1/1. Its function is as follows. Catalyzes the ATP-dependent amidation of deamido-NAD to form NAD. Uses ammonia as a nitrogen source. The sequence is that of NH(3)-dependent NAD(+) synthetase from Ectopseudomonas mendocina (strain ymp) (Pseudomonas mendocina).